The following is a 301-amino-acid chain: Probable alpha-L-glutamate ligase (301 aa).

One can recognise an ATP-grasp domain in the interval 104–287 (LQLLSRRGIG…VAGMIIEHLE (184 aa)). Residues Lys-141, 178–179 (EY), Asp-187, and 211–213 (RSN) contribute to the ATP site. Mg(2+)-binding residues include Asp-248, Glu-260, and Asn-262. The Mn(2+) site is built by Asp-248, Glu-260, and Asn-262.

This sequence belongs to the RimK family. Requires Mg(2+) as cofactor. The cofactor is Mn(2+).

This is Probable alpha-L-glutamate ligase from Pseudomonas entomophila (strain L48).